We begin with the raw amino-acid sequence, 220 residues long: Probable pterin-4-alpha-carbinolamine dehydratase, chloroplastic (220 aa).

The transit peptide at 1–50 (MAATSSSPPCNISASSLLLRQPSRSILKVFGLLPPVSRNNRKLGRLTVTR) directs the protein to the chloroplast.

Belongs to the pterin-4-alpha-carbinolamine dehydratase family. Interacts with SDIR1. Interacts with AIRP2. Ubiquitinated by SDIR1. Ubiquitination leads to its subsequent degradation, thus controlling abscisic acid (ABA) signaling. Ubiquitinated by AIRP2. Ubiquitination leads to its subsequent degradation, thus controlling abscisic acid (ABA) signaling during drought stress.

It is found in the plastid. It localises to the chloroplast. The protein resides in the cell membrane. Its subcellular location is the nucleus. The enzyme catalyses (4aS,6R)-4a-hydroxy-L-erythro-5,6,7,8-tetrahydrobiopterin = (6R)-L-erythro-6,7-dihydrobiopterin + H2O. Functionally, involved in tetrahydrobiopterin biosynthesis. Interacts with and acts downstream of the E3 ubiquitin-protein ligase SDIR1 in abscisic acid (ABA) and salt stress signaling. Regulates the expression of the bZIP transcription factor ABI5, which mediates responses to ABA during seed germination and salt stress. The SDIR1-ATP1/SDIRIP1 complex plays an important role in ABA signaling through the ubiquitination pathway. Acts downstream of AIRP2 in regulation of ABA signaling during drought stress. The polypeptide is Probable pterin-4-alpha-carbinolamine dehydratase, chloroplastic (Arabidopsis thaliana (Mouse-ear cress)).